Here is a 404-residue protein sequence, read N- to C-terminus: uncharacterized protein (404 aa).

This is an uncharacterized protein from Alcelaphine herpesvirus 1 (strain C500) (AlHV-1).